We begin with the raw amino-acid sequence, 428 residues long: Serine--tRNA ligase (428 aa).

236 to 238 provides a ligand contact to L-serine; that stretch reads TAE. 267-269 lines the ATP pocket; that stretch reads RSE. An L-serine-binding site is contributed by glutamate 290. Residue 354–357 participates in ATP binding; sequence EISS. L-serine is bound at residue serine 388.

Belongs to the class-II aminoacyl-tRNA synthetase family. Type-1 seryl-tRNA synthetase subfamily. In terms of assembly, homodimer. The tRNA molecule binds across the dimer.

It is found in the cytoplasm. The enzyme catalyses tRNA(Ser) + L-serine + ATP = L-seryl-tRNA(Ser) + AMP + diphosphate + H(+). It catalyses the reaction tRNA(Sec) + L-serine + ATP = L-seryl-tRNA(Sec) + AMP + diphosphate + H(+). It functions in the pathway aminoacyl-tRNA biosynthesis; selenocysteinyl-tRNA(Sec) biosynthesis; L-seryl-tRNA(Sec) from L-serine and tRNA(Sec): step 1/1. Functionally, catalyzes the attachment of serine to tRNA(Ser). Is also able to aminoacylate tRNA(Sec) with serine, to form the misacylated tRNA L-seryl-tRNA(Sec), which will be further converted into selenocysteinyl-tRNA(Sec). In Psychrobacter sp. (strain PRwf-1), this protein is Serine--tRNA ligase.